Reading from the N-terminus, the 371-residue chain is Queuine tRNA-ribosyltransferase (371 aa).

Residue Asp-90 is the Proton acceptor of the active site. Substrate is bound by residues 90–94, Asp-144, Gln-188, and Gly-215; that span reads DSGGF. The interval 246 to 252 is RNA binding; that stretch reads GVGTPED. Residue Asp-265 is the Nucleophile of the active site. Residues 270-274 are RNA binding; important for wobble base 34 recognition; the sequence is TRNAR. Zn(2+) contacts are provided by Cys-303, Cys-305, Cys-308, and His-334.

Belongs to the queuine tRNA-ribosyltransferase family. In terms of assembly, homodimer. Within each dimer, one monomer is responsible for RNA recognition and catalysis, while the other monomer binds to the replacement base PreQ1. It depends on Zn(2+) as a cofactor.

The enzyme catalyses 7-aminomethyl-7-carbaguanine + guanosine(34) in tRNA = 7-aminomethyl-7-carbaguanosine(34) in tRNA + guanine. It participates in tRNA modification; tRNA-queuosine biosynthesis. Functionally, catalyzes the base-exchange of a guanine (G) residue with the queuine precursor 7-aminomethyl-7-deazaguanine (PreQ1) at position 34 (anticodon wobble position) in tRNAs with GU(N) anticodons (tRNA-Asp, -Asn, -His and -Tyr). Catalysis occurs through a double-displacement mechanism. The nucleophile active site attacks the C1' of nucleotide 34 to detach the guanine base from the RNA, forming a covalent enzyme-RNA intermediate. The proton acceptor active site deprotonates the incoming PreQ1, allowing a nucleophilic attack on the C1' of the ribose to form the product. After dissociation, two additional enzymatic reactions on the tRNA convert PreQ1 to queuine (Q), resulting in the hypermodified nucleoside queuosine (7-(((4,5-cis-dihydroxy-2-cyclopenten-1-yl)amino)methyl)-7-deazaguanosine). This is Queuine tRNA-ribosyltransferase from Neisseria meningitidis serogroup A / serotype 4A (strain DSM 15465 / Z2491).